The sequence spans 271 residues: Interleukin-1 alpha (271 aa).

Residues 1 to 112 constitute a propeptide that is removed on maturation; sequence MAKVPDMFED…DSEEEIIKPR (112 aa). Position 82 is an N6-acetyllysine (K82). The nuclear localization signal (NLS) stretch occupies residues 82–86; the sequence is KKRRL. S87 is modified (phosphoserine). N102 and N141 each carry an N-linked (GlcNAc...) asparagine glycan.

It belongs to the IL-1 family. In terms of assembly, monomer. Interacts with TMED10; the interaction mediates the translocation from the cytoplasm into the ERGIC (endoplasmic reticulum-Golgi intermediate compartment) and thereby secretion. Interacts with IL1R1. Interacts with S100A13; this interaction is the first step in the export of IL1A, followed by direct translocation of this complex across the plasma membrane. In terms of processing, acetylated within its nuclear localization sequence, which impacts subcellular localization. Proteolytic processed by CAPN1 in a calcium-dependent manner. Cleavage from 31 kDa precursor to 18 kDa biologically active molecules. Post-translationally, phosphorylated. Phosphorylation greatly enhances susceptibility to digestion and promotes the conversion of pre-IL1A alpha to the biologically active IL1A.

The protein localises to the nucleus. It is found in the cytoplasm. It localises to the secreted. Functionally, cytokine constitutively present intracellularly in nearly all resting non-hematopoietic cells that plays an important role in inflammation and bridges the innate and adaptive immune systems. After binding to its receptor IL1R1 together with its accessory protein IL1RAP, forms the high affinity interleukin-1 receptor complex. Signaling involves the recruitment of adapter molecules such as MYD88, IRAK1 or IRAK4. In turn, mediates the activation of NF-kappa-B and the three MAPK pathways p38, p42/p44 and JNK pathways. Within the cell, acts as an alarmin and cell death results in its liberation in the extracellular space after disruption of the cell membrane to induce inflammation and alert the host to injury or damage. In addition to its role as a danger signal, which occurs when the cytokine is passively released by cell necrosis, directly senses DNA damage and acts as signal for genotoxic stress without loss of cell integrity. This is Interleukin-1 alpha (IL1A) from Cercocebus atys (Sooty mangabey).